A 122-amino-acid polypeptide reads, in one-letter code: MIQPQTRLKVADNTGAKEIMCIRVLGGSRVRYGRVGDIIVASVKEATPGGQVKKGDVVKAVIIRTAKEYGRPDGSHIRFDDNAAVLIGKENNPRGTRIFGPVARELREKQFMRIVSLAPEVL.

The protein belongs to the universal ribosomal protein uL14 family. Part of the 50S ribosomal subunit. Forms a cluster with proteins L3 and L19. In the 70S ribosome, L14 and L19 interact and together make contacts with the 16S rRNA in bridges B5 and B8.

In terms of biological role, binds to 23S rRNA. Forms part of two intersubunit bridges in the 70S ribosome. In Chloroflexus aggregans (strain MD-66 / DSM 9485), this protein is Large ribosomal subunit protein uL14.